Reading from the N-terminus, the 380-residue chain is Protein FAM110B (380 aa).

The tract at residues 92–272 (ALGSPTLKGF…RPSLQRSKSD (181 aa)) is disordered. Over residues 100-110 (GFGGGGGGAKS) the composition is skewed to gly residues. Positions 127–138 (ILNSSEGSSTGS) are enriched in polar residues. Residues 153–162 (DAAELHRHSF) show a composition bias toward basic and acidic residues. A compositionally biased stretch (low complexity) spans 239–248 (KVAAPAAVKS). A phosphoserine mark is found at Ser-248 and Ser-311. The segment at 327–347 (DCEQSQDSNSDLRNDDSANDR) is disordered. The segment covering 336–345 (SDLRNDDSAN) has biased composition (basic and acidic residues).

This sequence belongs to the FAM110 family.

The protein localises to the cytoplasm. Its subcellular location is the cytoskeleton. It is found in the microtubule organizing center. The protein resides in the centrosome. The chain is Protein FAM110B (FAM110B) from Bos taurus (Bovine).